The primary structure comprises 485 residues: Aspartyl/glutamyl-tRNA(Asn/Gln) amidotransferase subunit B (485 aa).

This sequence belongs to the GatB/GatE family. GatB subfamily. Heterotrimer of A, B and C subunits.

The catalysed reaction is L-glutamyl-tRNA(Gln) + L-glutamine + ATP + H2O = L-glutaminyl-tRNA(Gln) + L-glutamate + ADP + phosphate + H(+). The enzyme catalyses L-aspartyl-tRNA(Asn) + L-glutamine + ATP + H2O = L-asparaginyl-tRNA(Asn) + L-glutamate + ADP + phosphate + 2 H(+). In terms of biological role, allows the formation of correctly charged Asn-tRNA(Asn) or Gln-tRNA(Gln) through the transamidation of misacylated Asp-tRNA(Asn) or Glu-tRNA(Gln) in organisms which lack either or both of asparaginyl-tRNA or glutaminyl-tRNA synthetases. The reaction takes place in the presence of glutamine and ATP through an activated phospho-Asp-tRNA(Asn) or phospho-Glu-tRNA(Gln). This chain is Aspartyl/glutamyl-tRNA(Asn/Gln) amidotransferase subunit B, found in Borreliella afzelii (strain PKo) (Borrelia afzelii).